Reading from the N-terminus, the 247-residue chain is Pyrroloquinoline-quinone synthase (247 aa).

It belongs to the PqqC family.

It catalyses the reaction 6-(2-amino-2-carboxyethyl)-7,8-dioxo-1,2,3,4,7,8-hexahydroquinoline-2,4-dicarboxylate + 3 O2 = pyrroloquinoline quinone + 2 H2O2 + 2 H2O + H(+). It participates in cofactor biosynthesis; pyrroloquinoline quinone biosynthesis. Ring cyclization and eight-electron oxidation of 3a-(2-amino-2-carboxyethyl)-4,5-dioxo-4,5,6,7,8,9-hexahydroquinoline-7,9-dicarboxylic-acid to PQQ. This is Pyrroloquinoline-quinone synthase from Rhizobium rhizogenes (strain K84 / ATCC BAA-868) (Agrobacterium radiobacter).